Consider the following 409-residue polypeptide: Peptide chain release factor subunit 1 (409 aa).

This sequence belongs to the eukaryotic release factor 1 family. In terms of assembly, heterodimer of two subunits, one of which binds GTP.

It is found in the cytoplasm. Functionally, directs the termination of nascent peptide synthesis (translation) in response to the termination codons UAA, UAG and UGA. The polypeptide is Peptide chain release factor subunit 1 (Methanopyrus kandleri (strain AV19 / DSM 6324 / JCM 9639 / NBRC 100938)).